The chain runs to 318 residues: Olfactory receptor 51E1 (318 aa).

Topologically, residues 1-31 are extracellular; it reads MMVDPNGNESSATYFILIGLPGLEEAQFWLA. An N-linked (GlcNAc...) asparagine glycan is attached at asparagine 8. Residues 32–52 traverse the membrane as a helical segment; it reads FPLCSLYLIAVLGNLTIIYIV. Over 53 to 60 the chain is Cytoplasmic; it reads RTEHSLHE. A helical membrane pass occupies residues 61–81; it reads PMYIFLCMLSGIDILISTSSM. The Extracellular portion of the chain corresponds to 82–100; sequence PKMLAIFWFNSTTIQFDAC. An N-linked (GlcNAc...) asparagine glycan is attached at asparagine 91. Residues cysteine 100 and cysteine 182 are joined by a disulfide bond. A helical transmembrane segment spans residues 101–123; the sequence is LLQMFAIHSLSGMESTVLLAMAF. Residues 124–145 are Cytoplasmic-facing; sequence DRYVAICHPLRHATVLTLPRVT. Residues 146-166 traverse the membrane as a helical segment; that stretch reads KIGVAAVVRGAALMAPLPVFI. At 167-198 the chain is on the extracellular side; it reads KQLPFCRSNILSHSYCLHQDVMKLACDDIRVN. Residues 199-219 form a helical membrane-spanning segment; it reads VVYGLIVIISAIGLDSLLISF. Topologically, residues 220–239 are cytoplasmic; it reads SYLLILKTVLGLTREAQAKA. A helical membrane pass occupies residues 240–260; sequence FGTCVSHVCAVFIFYVPFIGL. Residues 261 to 275 lie on the Extracellular side of the membrane; the sequence is SMVHRFSKRRDSPLP. Residues 276–296 traverse the membrane as a helical segment; that stretch reads VILANIYLLVPPVLNPIVYGV. Over 297 to 318 the chain is Cytoplasmic; it reads KTKEIRQRILRLFHVATHASEP.

This sequence belongs to the G-protein coupled receptor 1 family. As to expression, highly expressed in prostate. Very low levels may be detected in some other tissues, such as placenta, skeletal muscle, heart, ovary and testis. Up-regulated in prostate cancers.

It localises to the cell membrane. In terms of biological role, odorant receptor. In Homo sapiens (Human), this protein is Olfactory receptor 51E1 (OR51E1).